Consider the following 365-residue polypeptide: Peptide chain release factor 2 (365 aa).

N5-methylglutamine is present on Gln252.

This sequence belongs to the prokaryotic/mitochondrial release factor family. Methylated by PrmC. Methylation increases the termination efficiency of RF2.

It localises to the cytoplasm. Its function is as follows. Peptide chain release factor 2 directs the termination of translation in response to the peptide chain termination codons UGA and UAA. The protein is Peptide chain release factor 2 of Shewanella baltica (strain OS223).